Reading from the N-terminus, the 430-residue chain is Probable glucose-6-phosphate isomerase (430 aa).

Glu-271 acts as the Proton donor in catalysis. Active-site residues include His-292, His-303, and Lys-403.

This sequence belongs to the GPI family.

It localises to the cytoplasm. It carries out the reaction alpha-D-glucose 6-phosphate = beta-D-fructose 6-phosphate. It functions in the pathway carbohydrate biosynthesis; gluconeogenesis. It participates in carbohydrate degradation; glycolysis; D-glyceraldehyde 3-phosphate and glycerone phosphate from D-glucose: step 2/4. In terms of biological role, catalyzes the reversible isomerization of glucose-6-phosphate to fructose-6-phosphate. The polypeptide is Probable glucose-6-phosphate isomerase (Haloquadratum walsbyi (strain DSM 16790 / HBSQ001)).